Reading from the N-terminus, the 993-residue chain is DNA double-strand break repair Rad50 ATPase (993 aa).

ATP-binding positions include R12, 32–38, and Q133; that span reads NGSGKSS. Coiled-coil stretches lie at residues 192–222 and 402–493; these read LENL…LEKL and EELK…LEKT. The 105-residue stretch at 452–556 folds into the Zinc-hook domain; sequence ENELKEKYED…KLNEIDSFKL (105 aa). Positions 497 and 500 each coordinate Zn(2+). Coiled coils occupy residues 570–612, 646–677, and 702–731; these read KVEE…LEND, DSSK…EINL, and ETEK…VLKN.

The protein belongs to the SMC family. RAD50 subfamily. Homodimer. Forms a heterotetramer composed of two Mre11 subunits and two Rad50 subunits. Zn(2+) serves as cofactor.

In terms of biological role, part of the Rad50/Mre11 complex, which is involved in the early steps of DNA double-strand break (DSB) repair. The complex may facilitate opening of the processed DNA ends to aid in the recruitment of HerA and NurA. Rad50 controls the balance between DNA end bridging and DNA resection via ATP-dependent structural rearrangements of the Rad50/Mre11 complex. In Methanococcus maripaludis (strain DSM 14266 / JCM 13030 / NBRC 101832 / S2 / LL), this protein is DNA double-strand break repair Rad50 ATPase.